The primary structure comprises 327 residues: Methionyl-tRNA formyltransferase (327 aa).

113 to 116 (SILP) contacts (6S)-5,6,7,8-tetrahydrofolate.

This sequence belongs to the Fmt family.

It catalyses the reaction L-methionyl-tRNA(fMet) + (6R)-10-formyltetrahydrofolate = N-formyl-L-methionyl-tRNA(fMet) + (6S)-5,6,7,8-tetrahydrofolate + H(+). In terms of biological role, attaches a formyl group to the free amino group of methionyl-tRNA(fMet). The formyl group appears to play a dual role in the initiator identity of N-formylmethionyl-tRNA by promoting its recognition by IF2 and preventing the misappropriation of this tRNA by the elongation apparatus. This Colwellia psychrerythraea (strain 34H / ATCC BAA-681) (Vibrio psychroerythus) protein is Methionyl-tRNA formyltransferase.